We begin with the raw amino-acid sequence, 292 residues long: Ribosomal RNA small subunit methyltransferase I (292 aa).

Belongs to the methyltransferase superfamily. RsmI family.

The protein resides in the cytoplasm. It catalyses the reaction cytidine(1402) in 16S rRNA + S-adenosyl-L-methionine = 2'-O-methylcytidine(1402) in 16S rRNA + S-adenosyl-L-homocysteine + H(+). Its function is as follows. Catalyzes the 2'-O-methylation of the ribose of cytidine 1402 (C1402) in 16S rRNA. The sequence is that of Ribosomal RNA small subunit methyltransferase I from Buchnera aphidicola subsp. Baizongia pistaciae (strain Bp).